The chain runs to 217 residues: Adenylate kinase (217 aa).

10–15 (GAGKGT) provides a ligand contact to ATP. The segment at 30–59 (STGDMLRAAVKAGTPLGIEAKKVMDAGGLV) is NMP. AMP contacts are provided by residues Thr-31, Arg-36, 57–59 (GLV), 85–88 (GFPR), and Gln-92. Residues 122 to 159 (GRRAHLASGRTYHVKYNPPKVEGKDDVTGEDLVQRDDD) form an LID region. Residues Arg-123 and 132-133 (TY) contribute to the ATP site. AMP contacts are provided by Arg-156 and Arg-167. Gly-203 contributes to the ATP binding site.

The protein belongs to the adenylate kinase family. As to quaternary structure, monomer.

It is found in the cytoplasm. It carries out the reaction AMP + ATP = 2 ADP. The protein operates within purine metabolism; AMP biosynthesis via salvage pathway; AMP from ADP: step 1/1. In terms of biological role, catalyzes the reversible transfer of the terminal phosphate group between ATP and AMP. Plays an important role in cellular energy homeostasis and in adenine nucleotide metabolism. The chain is Adenylate kinase from Azoarcus sp. (strain BH72).